Reading from the N-terminus, the 396-residue chain is Growth-regulating factor 1 (396 aa).

In terms of domain architecture, QLQ spans 18–53 (PFTASQWQELEHQALIYKYMASGTPIPSDLILPLRR). Short sequence motifs (bipartite nuclear localization signal) lie at residues 86–105 (RKAE…KKWR) and 123–130 (RGKNRSRK). The region spanning 90-134 (DPEPGRCRRTDGKKWRCSKEAYPDSKYCEKHMHRGKNRSRKPVEM) is the WRC domain. The segment at 117-176 (CEKHMHRGKNRSRKPVEMSLATPPPPSSSATSAASNSSAGVAPTTTTTSSPAPSYSRPAP) is disordered. Positions 120–129 (HMHRGKNRSR) are enriched in basic residues. A compositionally biased stretch (low complexity) spans 144-174 (SSATSAASNSSAGVAPTTTTTSSPAPSYSRP).

Belongs to the GRF family. In terms of tissue distribution, highly expressed in the intercalary meristem of the internode and in the shoot apex. Detected in the leaf primordia and emerging leaves in the uppermost node. Preferentially localized in the epidermis and in the tissues surrounding vascular bundles of the intercalary meristem of the internode and in adventitious roots of the second highest node. Low expression in the coleoptile and in the youngest leaf.

The protein resides in the nucleus. Its function is as follows. Transcription activator that plays a regulatory role in gibberellin-induced stem elongation. This Oryza sativa subsp. indica (Rice) protein is Growth-regulating factor 1 (GRF1).